A 669-amino-acid polypeptide reads, in one-letter code: Trissin receptor (669 aa).

Polar residues predominate over residues Met1–Glu15. Residues Met1–Pro90 form a disordered region. Over Met1–Arg184 the chain is Extracellular. Residues Asn55–Gln74 show a composition bias toward low complexity. Asn66 carries an N-linked (GlcNAc...) asparagine glycan. Residues His79–Leu89 are compositionally biased toward pro residues. N-linked (GlcNAc...) asparagine glycans are attached at residues Asn120 and Asn130. The chain crosses the membrane as a helical span at residues Ile185–Val205. Residues Ile206 to Ser217 are Cytoplasmic-facing. The helical transmembrane segment at Ile218–Val238 threads the bilayer. At Met239–Thr269 the chain is on the extracellular side. N-linked (GlcNAc...) asparagine glycosylation occurs at Asn241. A disulfide bridge connects residues Cys257 and Cys340. Residues Ala270–Ile290 form a helical membrane-spanning segment. The Cytoplasmic segment spans residues Thr291–Arg302. Residues Met303–Ser323 form a helical membrane-spanning segment. Topologically, residues Lys324–Lys350 are extracellular. The helical transmembrane segment at Leu351 to Leu371 threads the bilayer. Over Tyr372–Gly552 the chain is Cytoplasmic. Over residues Val390–Pro401 the composition is skewed to low complexity. Disordered stretches follow at residues Val390–Ser481 and Ala515–Thr537. Positions Met414–His429 are enriched in basic residues. Over residues Val441–Gly454 the composition is skewed to gly residues. Positions Pro455–Lys470 are enriched in low complexity. A compositionally biased stretch (gly residues) spans Ser524–Ala534. The chain crosses the membrane as a helical span at residues Val553–Ala573. Over Arg574 to Thr595 the chain is Extracellular. The helical transmembrane segment at Pro596–Leu616 threads the bilayer. The Cytoplasmic segment spans residues Ser617–Leu669. Residues Gly635 to Leu669 are disordered. A compositionally biased stretch (polar residues) spans Gln653–Leu669.

It belongs to the G-protein coupled receptor 1 family.

The protein localises to the cell membrane. Its function is as follows. G-protein coupled receptor which is activated by the Trissin peptide in vitro, leading to increased intracellular calcium ion levels. This chain is Trissin receptor, found in Drosophila melanogaster (Fruit fly).